The following is a 133-amino-acid chain: Ubiquitin-like FUBI-ribosomal protein eS30 fusion protein (133 aa).

One can recognise a Ubiquitin-like domain in the interval 1–74 (MQLFVRAQEL…LEVAGRMLGG (74 aa)). Residues 84-110 (GKVRGQTPKVAKQEKKKKKTGRAKRRM) form a disordered region. The segment covering 97–110 (EKKKKKTGRAKRRM) has biased composition (basic residues). At Lys-125 the chain carries N6-succinyllysine.

It in the N-terminal section; belongs to the ubiquitin family. This sequence in the C-terminal section; belongs to the eukaryotic ribosomal protein eS30 family. Component of the 40S subunit of the ribosome. Post-translationally, FUBI is cleaved from ribosomal protein S30 by the deubiquitinase USP36 before the assembly of ribosomal protein S30 into pre-40S ribosomal particles. FUBI removal from ribosomal protein S30 is a crucial event for the final maturation of pre-40S particles.

It localises to the cytoplasm. It is found in the nucleus. Functionally, may have pro-apoptotic activity. Its function is as follows. Component of the 40S subunit of the ribosome. Contributes to the assembly and function of 40S ribosomal subunits. The chain is Ubiquitin-like FUBI-ribosomal protein eS30 fusion protein from Homo sapiens (Human).